The chain runs to 292 residues: Nitrogenase iron protein 2 (292 aa).

12-19 serves as a coordination point for ATP; sequence GKGGIGKS. Residue Cys97 participates in [4Fe-4S] cluster binding. Arg100 carries the post-translational modification ADP-ribosylarginine; by dinitrogenase reductase ADP-ribosyltransferase. Cys133 provides a ligand contact to [4Fe-4S] cluster.

This sequence belongs to the NifH/BchL/ChlL family. Homodimer. [4Fe-4S] cluster serves as cofactor. The reversible ADP-ribosylation of Arg-100 inactivates the nitrogenase reductase and regulates nitrogenase activity.

It catalyses the reaction N2 + 8 reduced [2Fe-2S]-[ferredoxin] + 16 ATP + 16 H2O = H2 + 8 oxidized [2Fe-2S]-[ferredoxin] + 2 NH4(+) + 16 ADP + 16 phosphate + 6 H(+). In terms of biological role, the key enzymatic reactions in nitrogen fixation are catalyzed by the nitrogenase complex, which has 2 components: the iron protein and the molybdenum-iron protein. This chain is Nitrogenase iron protein 2 (nifH2), found in Paenibacillus durus (Paenibacillus azotofixans).